The following is a 688-amino-acid chain: Glycine--tRNA ligase beta subunit (688 aa).

This sequence belongs to the class-II aminoacyl-tRNA synthetase family. As to quaternary structure, tetramer of two alpha and two beta subunits.

The protein localises to the cytoplasm. The catalysed reaction is tRNA(Gly) + glycine + ATP = glycyl-tRNA(Gly) + AMP + diphosphate. This chain is Glycine--tRNA ligase beta subunit, found in Aliivibrio salmonicida (strain LFI1238) (Vibrio salmonicida (strain LFI1238)).